The following is a 99-amino-acid chain: Large ribosomal subunit protein uL23c (99 aa).

It belongs to the universal ribosomal protein uL23 family. In terms of assembly, part of the 50S ribosomal subunit.

Its subcellular location is the plastid. The protein resides in the chloroplast. In terms of biological role, binds to 23S rRNA. In Emiliania huxleyi (Coccolithophore), this protein is Large ribosomal subunit protein uL23c (rpl23).